The sequence spans 233 residues: Uridylate kinase (233 aa).

ATP is bound at residue 7-10 (KISG). Gly49 contributes to the UMP binding site. Positions 50 and 54 each coordinate ATP. UMP is bound by residues Asp68 and 129 to 136 (TGNPFFTT). The ATP site is built by Thr156, Tyr162, and Asp165.

Belongs to the UMP kinase family. In terms of assembly, homohexamer.

It localises to the cytoplasm. It carries out the reaction UMP + ATP = UDP + ADP. The protein operates within pyrimidine metabolism; CTP biosynthesis via de novo pathway; UDP from UMP (UMPK route): step 1/1. Its activity is regulated as follows. Inhibited by UTP. Catalyzes the reversible phosphorylation of UMP to UDP. The protein is Uridylate kinase of Neorickettsia sennetsu (strain ATCC VR-367 / Miyayama) (Ehrlichia sennetsu).